The chain runs to 948 residues: UvrABC system protein A (948 aa).

Residue 42-49 (GLSGSGKS) coordinates ATP. A C4-type zinc finger spans residues 262 to 289 (CPVCSYSLPELEPRLFSFNNPMGSCPTC). ABC transporter domains are found at residues 319 to 596 (WDKR…ENSV) and 616 to 945 (VNPG…KYLK). 649–656 (GVSGSGKS) is a binding site for ATP. The C4-type zinc finger occupies 748–774 (CEACQGDGVIKVEMHFLPDVYVPCEVC).

The protein belongs to the ABC transporter superfamily. UvrA family. Forms a heterotetramer with UvrB during the search for lesions.

The protein localises to the cytoplasm. In terms of biological role, the UvrABC repair system catalyzes the recognition and processing of DNA lesions. UvrA is an ATPase and a DNA-binding protein. A damage recognition complex composed of 2 UvrA and 2 UvrB subunits scans DNA for abnormalities. When the presence of a lesion has been verified by UvrB, the UvrA molecules dissociate. This Neisseria meningitidis serogroup A / serotype 4A (strain DSM 15465 / Z2491) protein is UvrABC system protein A.